We begin with the raw amino-acid sequence, 131 residues long: Type 3 secretion system pilotin (131 aa).

The first 15 residues, 1–15 (MSRIIALIISFLLVG), serve as a signal peptide directing secretion. Residue cysteine 16 is the site of N-palmitoyl cysteine attachment. A lipid anchor (S-diacylglycerol cysteine) is attached at cysteine 16.

The protein belongs to the ExsB/YscW family. As to quaternary structure, interacts with YscC/SctC.

Its subcellular location is the cell outer membrane. In terms of biological role, involved in the synthesis of the type III secretion system (T3SS), also called injectisome, which is used to inject bacterial effector proteins into eukaryotic host cells. Pilot protein that is required for the proper localization of the secretin YscC/SctC in the outer membrane. Also required for efficient oligomerization of YscC/SctC and stabilization of the oligomers. This is Type 3 secretion system pilotin from Yersinia enterocolitica.